The chain runs to 625 residues: RalA-binding protein 1 (625 aa).

2 stretches are compositionally biased toward basic and acidic residues: residues 1–11 (MDFDSPEEKEF) and 20–60 (ADAK…KDRG). The interval 1 to 172 (MDFDSPEEKE…SKQLSQQQDD (172 aa)) is disordered. Phosphoserine is present on residues serine 68 and serine 69. Positions 94 to 157 (KSKEKREKSR…EKDKKADKKD (64 aa)) are enriched in basic and acidic residues. Residues 191-385 (VSLATERSRC…PLTSTSPKLP (195 aa)) form the Rho-GAP domain. Residues 443 to 500 (QEKTAEEVDNSSSAPPAVASEDTTDSKPAGTPAVSTNNSISQEEPKTDTLTPKDAPND) are disordered. A compositionally biased stretch (polar residues) spans 475-484 (AVSTNNSISQ).

Interacts with CycB and numb.

In terms of biological role, participates in receptor endocytosis during interphase, is also involved in mitotic processes when endocytosis is switched off. The polypeptide is RalA-binding protein 1 (Drosophila melanogaster (Fruit fly)).